Reading from the N-terminus, the 1099-residue chain is Contactin-5 (1099 aa).

The first 18 residues, 1–18, serve as a signal peptide directing secretion; sequence MASSWRLILFLSFTSCLS. Ig-like C2-type domains follow at residues 99 to 190, 196 to 282, 300 to 385, 390 to 474, 480 to 569, and 571 to 660; these read PVFV…ATLQ, NFSG…RVLS, PKIE…GQLQ, PHWV…AELK, PSFE…VSVK, and PTRI…DSVS. An intrachain disulfide couples Cys-123 to Cys-173. 2 N-linked (GlcNAc...) asparagine glycosylation sites follow: Asn-138 and Asn-196. Intrachain disulfides connect Cys-217-Cys-269 and Cys-322-Cys-369. Asn-397, Asn-449, and Asn-540 each carry an N-linked (GlcNAc...) asparagine glycan. Cystine bridges form between Cys-411/Cys-458, Cys-503/Cys-551, and Cys-593/Cys-650. 4 consecutive Fibronectin type-III domains span residues 673 to 771, 776 to 873, 878 to 972, and 977 to 1067; these read PPGV…TNEA, APSN…SAEG, APTD…TKRH, and PPGN…SYAG. Asn-779, Asn-816, and Asn-931 each carry an N-linked (GlcNAc...) asparagine glycan. Residues 958-983 are disordered; that stretch reads YGPPSREVSATTKRHPPSEPPGNLRW. Asn-1002 is a glycosylation site (N-linked (GlcNAc...) asparagine). The GPI-anchor amidated serine moiety is linked to residue Ser-1072. The propeptide at 1073-1099 is removed in mature form; sequence AQSTLHSLSKWSSVTLLLALMLPSSSW.

Belongs to the immunoglobulin superfamily. Contactin family. In terms of assembly, interacts with PTPRG. Specifically expressed in the nervous system. Expressed in cerebrum and cerebellum but at low level in spinal cord. In brain, it is expressed in highly restricted regions at postnatal day 7, such as the auditory pathway, including the cochlear nucleus, superior olive, inferior colliculus, medial geniculate nucleus and auditory cortex. Expressed in the accessory olfactory bulb, glomerular and mitral cell layers in the olfactory bulb, anterior thalamic nuclei, layers II-IV of the cerebral cortex, dentate gyrus of the hippocampus and external granule cells and Purkinje cells of the cerebellum. Also expressed in the piriform cortex, inferior olive and facial nucleus. Weakly or not expressed in other parts of the brain.

It is found in the cell membrane. Functionally, contactins mediate cell surface interactions during nervous system development. Has some neurite outgrowth-promoting activity in the cerebral cortical neurons but not in hippocampal neurons. Probably involved in neuronal activity in the auditory system. The chain is Contactin-5 (Cntn5) from Rattus norvegicus (Rat).